Reading from the N-terminus, the 94-residue chain is Co-chaperonin GroES (94 aa).

The protein belongs to the GroES chaperonin family. As to quaternary structure, heptamer of 7 subunits arranged in a ring. Interacts with the chaperonin GroEL.

The protein resides in the cytoplasm. Functionally, together with the chaperonin GroEL, plays an essential role in assisting protein folding. The GroEL-GroES system forms a nano-cage that allows encapsulation of the non-native substrate proteins and provides a physical environment optimized to promote and accelerate protein folding. GroES binds to the apical surface of the GroEL ring, thereby capping the opening of the GroEL channel. In Heliobacterium modesticaldum (strain ATCC 51547 / Ice1), this protein is Co-chaperonin GroES.